A 264-amino-acid chain; its full sequence is Caffeoyl-CoA O-methyltransferase 2 (264 aa).

The span at 1-20 shows a compositional bias: low complexity; the sequence is MATTATEATKTTAPAQEQQA. A disordered region spans residues 1-37; sequence MATTATEATKTTAPAQEQQANGNGNGEQKTRHSEVGH. The span at 28–37 shows a compositional bias: basic and acidic residues; the sequence is QKTRHSEVGH. Position 38 (Lys38) interacts with substrate. Residues Thr80, Glu102, 104-105, Ser110, Asp128, and Ala157 each bind S-adenosyl-L-methionine; that span reads GV. Asp180 serves as a coordination point for substrate. Asp180 is an a divalent metal cation binding site. Asp182 provides a ligand contact to S-adenosyl-L-methionine. A divalent metal cation-binding residues include Asp206 and Asn207. Asn211 contributes to the substrate binding site.

The protein belongs to the class I-like SAM-binding methyltransferase superfamily. Cation-dependent O-methyltransferase family. CCoAMT subfamily. It depends on a divalent metal cation as a cofactor.

The enzyme catalyses (E)-caffeoyl-CoA + S-adenosyl-L-methionine = (E)-feruloyl-CoA + S-adenosyl-L-homocysteine + H(+). The protein operates within aromatic compound metabolism; phenylpropanoid biosynthesis. In terms of biological role, methylates caffeoyl-CoA to feruloyl-CoA and 5-hydroxyferuloyl-CoA to sinapoyl-CoA. Plays a role in the synthesis of feruloylated polysaccharides. Involved in the reinforcement of the plant cell wall. Also involved in the responding to wounding or pathogen challenge by the increased formation of cell wall-bound ferulic acid polymers. The sequence is that of Caffeoyl-CoA O-methyltransferase 2 (CCOAOMT2) from Zea mays (Maize).